We begin with the raw amino-acid sequence, 319 residues long: Malate dehydrogenase (319 aa).

NAD(+)-binding positions include Gly-10 to Gly-15 and Asp-34. 2 residues coordinate substrate: Arg-83 and Arg-89. NAD(+)-binding positions include Asn-96 and Ile-119 to Asn-121. 2 residues coordinate substrate: Asn-121 and Arg-152. His-176 acts as the Proton acceptor in catalysis.

It belongs to the LDH/MDH superfamily. MDH type 3 family.

It catalyses the reaction (S)-malate + NAD(+) = oxaloacetate + NADH + H(+). In terms of biological role, catalyzes the reversible oxidation of malate to oxaloacetate. This chain is Malate dehydrogenase, found in Francisella tularensis subsp. holarctica (strain FTNF002-00 / FTA).